The primary structure comprises 210 residues: MIHGLLGRKIGMMQYFTKEGRAIPVTVIAAGPCIVTQIRTPERDGYSAVQLGYEEVEARKLTKPQQGHLKASGGKMLRYLREFSADDPLAHKPGEVVTVELFKPGQKVDISGTSKGRGFAGVVKRHGFRGGPKTHGQSDRHRAPGSIGAGTTPGRVWKGQRMAGRMGGDRVTIQNLEVVEVLPEQNLLLVKGSVPGARNGLLQIRKAVKG.

The interval 125–154 (RHGFRGGPKTHGQSDRHRAPGSIGAGTTPG) is disordered.

This sequence belongs to the universal ribosomal protein uL3 family. As to quaternary structure, part of the 50S ribosomal subunit. Forms a cluster with proteins L14 and L19.

One of the primary rRNA binding proteins, it binds directly near the 3'-end of the 23S rRNA, where it nucleates assembly of the 50S subunit. The sequence is that of Large ribosomal subunit protein uL3 from Chloroflexus aggregans (strain MD-66 / DSM 9485).